Reading from the N-terminus, the 469-residue chain is Tubulin gamma-1 chain (469 aa).

GTP is bound at residue 142-148 (AGGTGSG).

The protein belongs to the tubulin family.

It localises to the cytoplasm. The protein localises to the cytoskeleton. Its subcellular location is the microtubule organizing center. Functionally, tubulin is the major constituent of microtubules. The gamma chain is found at microtubule organizing centers (MTOC) such as the spindle poles, suggesting that it is involved in the minus-end nucleation of microtubule assembly. This chain is Tubulin gamma-1 chain (TUBG1), found in Zea mays (Maize).